We begin with the raw amino-acid sequence, 196 residues long: Auxin-induced protein 22B (196 aa).

The short motif at 18-22 is the EAR-like (transcriptional repression) element; it reads LRLGL. Positions 44–74 are disordered; the sequence is RQVRETSQDSVSISKASHHQQHVETVSAPPP. The region spanning 99 to 186 is the PB1 domain; it reads GIFVKVSMDG…SCKRLRIMKG (88 aa).

The protein belongs to the Aux/IAA family. Homodimers and heterodimers.

The protein resides in the nucleus. In terms of biological role, aux/IAA proteins are short-lived transcriptional factors that function as repressors of early auxin response genes at low auxin concentrations. Repression is thought to result from the interaction with auxin response factors (ARFs), proteins that bind to the auxin-responsive promoter element (AuxRE). Formation of heterodimers with ARF proteins may alter their ability to modulate early auxin response genes expression. This is Auxin-induced protein 22B (AUX22B) from Vigna radiata var. radiata (Mung bean).